Reading from the N-terminus, the 330-residue chain is MNFDQKGMKKRSITVAYFFENIGRNHDIKLRRLNRVDEQKRRISERELHRPGLALAGFTNLFTYKRVQILGNTETRFLNNHDEAERRKAFENLVRFKVPCIILTSTNKLQPELLEMATEAGVPVYATRHSSTKAMYLITDFLDDQFSLHQQYHGSMVDVCGVGVLLTGKSGLGKSEIALDLIERGHGLVADDVVIIRRKGESLVLNARRNDIIDHFMEIRGLGVVDVKANFGIRAIRDIKDVQVVVELLEWNRETDYERLGLDMKSIKILGVEVPLVQLPIFPGKNIAVIIEVVALNFLLKHYSNYVAAEALTERIRTSIDKGNEQDDES.

Active-site residues include H153 and K174. ATP is bound at residue 168-175 (GKSGLGKS). Position 175 (S175) interacts with Mg(2+). The Proton acceptor; for phosphorylation activity. Proton donor; for dephosphorylation activity role is filled by D192. The tract at residues 217–226 (MEIRGLGVVD) is important for the catalytic mechanism of both phosphorylation and dephosphorylation. E218 is a Mg(2+) binding site. R259 is an active-site residue. The interval 280 to 285 (PIFPGK) is important for the catalytic mechanism of dephosphorylation.

It belongs to the HPrK/P family. In terms of assembly, homohexamer. Requires Mg(2+) as cofactor.

The catalysed reaction is [HPr protein]-L-serine + ATP = [HPr protein]-O-phospho-L-serine + ADP + H(+). The enzyme catalyses [HPr protein]-O-phospho-L-serine + phosphate + H(+) = [HPr protein]-L-serine + diphosphate. Its function is as follows. Catalyzes the ATP- as well as the pyrophosphate-dependent phosphorylation of a specific serine residue in HPr, a phosphocarrier protein of the phosphoenolpyruvate-dependent sugar phosphotransferase system (PTS). HprK/P also catalyzes the pyrophosphate-producing, inorganic phosphate-dependent dephosphorylation (phosphorolysis) of seryl-phosphorylated HPr (P-Ser-HPr). The protein is HPr kinase/phosphorylase of Chlorobium limicola (strain DSM 245 / NBRC 103803 / 6330).